Reading from the N-terminus, the 137-residue chain is Methylmalonyl-CoA decarboxylase subunit delta (137 aa).

The helical transmembrane segment at 30–50 threads the bilayer; the sequence is VTVVLGMGITVVALIFLMYII.

It belongs to the OadG family. As to quaternary structure, the methylmalonyl-CoA decarboxylase is composed of four subunits: the carboxyltransferase alpha subunit (MmdA), the tunnel beta subunit (MmdB), the biotin-containing gamma subunit (MmdC) and the delta subunit (MmdD).

The protein resides in the cell membrane. It catalyses the reaction (S)-methylmalonyl-CoA + Na(+)(in) + H(+)(out) = propanoyl-CoA + Na(+)(out) + CO2. Functionally, subunit of the sodium ion pump methylmalonyl-CoA decarboxylase, which converts the chemical energy of a decarboxylation reaction into an electrochemical gradient of Na(+) ions across the cytoplasmic membrane, thereby creating a sodium ion motive force that is used for ATP synthesis. The delta subunit is required for catalytic activity as well as for the proper assembly of the individual subunits to an enzyme complex. This chain is Methylmalonyl-CoA decarboxylase subunit delta, found in Propionigenium modestum.